A 465-amino-acid chain; its full sequence is UDP-N-acetylmuramate--L-alanine ligase (465 aa).

Position 112-118 (112-118 (GTHGKTT)) interacts with ATP.

This sequence belongs to the MurCDEF family.

The protein localises to the cytoplasm. It catalyses the reaction UDP-N-acetyl-alpha-D-muramate + L-alanine + ATP = UDP-N-acetyl-alpha-D-muramoyl-L-alanine + ADP + phosphate + H(+). It functions in the pathway cell wall biogenesis; peptidoglycan biosynthesis. In terms of biological role, cell wall formation. This chain is UDP-N-acetylmuramate--L-alanine ligase, found in Burkholderia thailandensis (strain ATCC 700388 / DSM 13276 / CCUG 48851 / CIP 106301 / E264).